Consider the following 182-residue polypeptide: NADH-quinone oxidoreductase subunit I (182 aa).

2 4Fe-4S ferredoxin-type domains span residues Leu-52–Ala-82 and Asp-92–Asp-121. [4Fe-4S] cluster-binding residues include Cys-62, Cys-65, Cys-68, Cys-72, Cys-101, Cys-104, Cys-107, and Cys-111.

The protein belongs to the complex I 23 kDa subunit family. As to quaternary structure, NDH-1 is composed of 13 different subunits. Subunits NuoA, H, J, K, L, M, N constitute the membrane sector of the complex. The cofactor is [4Fe-4S] cluster.

The protein localises to the cell inner membrane. The enzyme catalyses a quinone + NADH + 5 H(+)(in) = a quinol + NAD(+) + 4 H(+)(out). Functionally, NDH-1 shuttles electrons from NADH, via FMN and iron-sulfur (Fe-S) centers, to quinones in the respiratory chain. The immediate electron acceptor for the enzyme in this species is believed to be ubiquinone. Couples the redox reaction to proton translocation (for every two electrons transferred, four hydrogen ions are translocated across the cytoplasmic membrane), and thus conserves the redox energy in a proton gradient. The chain is NADH-quinone oxidoreductase subunit I from Pseudomonas savastanoi pv. phaseolicola (strain 1448A / Race 6) (Pseudomonas syringae pv. phaseolicola (strain 1448A / Race 6)).